Consider the following 3108-residue polypeptide: Probable polyketide synthase 39 (3108 aa).

The region spanning 9–440 is the Ketosynthase family 3 (KS3) domain; sequence DDDVAVIGIG…GSNVCLILSE (432 aa). Active-site for beta-ketoacyl synthase activity residues include Cys-181, His-320, and His-363. The segment at 643–676 is acyl/malonyl transferase; that stretch reads GVSADIIIGHSLGEISSAYCSGMIDFQTLCYLTY. The For acyl/malonyl transferase activity role is filled by Ser-653. Residues 939–1068 form an N-terminal hotdog fold region; the sequence is HEKIKSEGPS…GNFSLFKHNI (130 aa). One can recognise a PKS/mFAS DH domain in the interval 939 to 1265; the sequence is HEKIKSEGPS…CTIAASNPDS (327 aa). The active-site Proton acceptor; for dehydratase activity is His-980. Residues 1085 to 1265 form a C-terminal hotdog fold region; that stretch reads NFTSISKQDL…CTIAASNPDS (181 aa). The active-site Proton donor; for dehydratase activity is Asp-1157. Residues 1375–1435 form a disordered region; that stretch reads NNNNNNNNNN…NNNNNNNNNN (61 aa). A Carrier domain is found at 2566 to 2643; it reads GNNEIIHSTI…QSIEIIKSAL (78 aa). Position 2603 is an O-(pantetheine 4'-phosphoryl)serine (Ser-2603). A helical membrane pass occupies residues 2702–2722; sequence IFLTGSTGFLGAYLLMELIKM.

Requires pantetheine 4'-phosphate as cofactor.

It localises to the membrane. Functionally, probable polyketide synthase. This chain is Probable polyketide synthase 39 (pks39), found in Dictyostelium discoideum (Social amoeba).